Here is a 301-residue protein sequence, read N- to C-terminus: Porphobilinogen deaminase (301 aa).

Cysteine 240 is subject to S-(dipyrrolylmethanemethyl)cysteine.

Belongs to the HMBS family. Monomer. It depends on dipyrromethane as a cofactor.

The enzyme catalyses 4 porphobilinogen + H2O = hydroxymethylbilane + 4 NH4(+). Its pathway is porphyrin-containing compound metabolism; protoporphyrin-IX biosynthesis; coproporphyrinogen-III from 5-aminolevulinate: step 2/4. Functionally, tetrapolymerization of the monopyrrole PBG into the hydroxymethylbilane pre-uroporphyrinogen in several discrete steps. The sequence is that of Porphobilinogen deaminase from Clostridioides difficile (strain 630) (Peptoclostridium difficile).